A 300-amino-acid chain; its full sequence is MTASALSKWPTCLACLRRLAQPFGTSAARHGEPRARAVPVIRPIVHTQTRAASHRMRLQDQGVVVRLLEDIPKFGRKHAIFRIERGRMRNEWFPKNKAEYMTPARFQELGLTRDAIGEVDRSFVIMSALEAATRPKPEEQKTEEPVPEVQISQVNVPDVTPETAHALLSELIPNTLTFHREPVPIPISQPKPALEPKISPLIARHVPASTPETPSTGEARRAIFGSVSSSDILNQIKALVSGHEEASRIVLGPSSVKIVGLAEDNDRIRHLGRWEIEIAVARAGGLDPVRKSVEILPSAQ.

Belongs to the bacterial ribosomal protein bL9 family. In terms of assembly, component of the mitochondrial large ribosomal subunit (mt-LSU). Mature N.crassa 74S mitochondrial ribosomes consist of a small (37S) and a large (54S) subunit. The 37S small subunit contains a 16S ribosomal RNA (16S mt-rRNA) and 32 different proteins. The 54S large subunit contains a 23S rRNA (23S mt-rRNA) and 42 different proteins.

It localises to the mitochondrion. In terms of biological role, component of the mitochondrial ribosome (mitoribosome), a dedicated translation machinery responsible for the synthesis of mitochondrial genome-encoded proteins, including at least some of the essential transmembrane subunits of the mitochondrial respiratory chain. The mitoribosomes are attached to the mitochondrial inner membrane and translation products are cotranslationally integrated into the membrane. In Neurospora crassa (strain ATCC 24698 / 74-OR23-1A / CBS 708.71 / DSM 1257 / FGSC 987), this protein is Large ribosomal subunit protein bL9m (mrpl50).